A 182-amino-acid chain; its full sequence is Translation initiation factor IF-3, chloroplastic (182 aa).

The protein belongs to the IF-3 family. Monomer.

It localises to the plastid. It is found in the chloroplast. In terms of biological role, IF-3 binds to the 30S ribosomal subunit and shifts the equilibrium between 70S ribosomes and their 50S and 30S subunits in favor of the free subunits, thus enhancing the availability of 30S subunits on which protein synthesis initiation begins. In Porphyra purpurea (Red seaweed), this protein is Translation initiation factor IF-3, chloroplastic.